Reading from the N-terminus, the 490-residue chain is O-acetyltransferase PaAT-2 (490 aa).

The Proton acceptor role is filled by His-165.

The protein belongs to the plant acyltransferase family.

Its pathway is mycotoxin biosynthesis. In terms of biological role, O-acetyltransferase; part of the 2 gene clusters that mediate the biosynthesis of fusicoccins, diterpene glucosides that display phytohormone-like activity and function as potent activators of plasma membrane H(+)-ATPases in plants by modifying 14-3-3 proteins and cause the plant disease constriction canker. The first step in the pathway is performed by the fusicoccadiene synthase PaFS that possesses both prenyl transferase and terpene cyclase activity, converting isopentenyl diphosphate and dimethylallyl diphosphate into geranylgeranyl diphosphate (GGDP) and successively converting GGDP into fusicocca-2,10(14)-diene, a precursor for fusicoccin H. The second step is the oxidation at the C-8 position by the cytochrome P450 monooxygenase PaP450-2 to yield fusicocca-2,10(14)-diene-8-beta-ol. The cytochrome P450 monooxygenase PaP450-1 then catalyzes the hydroxylation at the C-16 position to produce fusicocca-2,10(14)-diene-8-beta,16-diol. The dioxygenase fc-dox then catalyzes the 16-oxydation of fusicocca-2,10(14)-diene-8-beta,16-diol to yield an aldehyde (8-beta-hydroxyfusicocca-1,10(14)-dien-16-al). The short-chain dehydrogenase/reductase fc-sdr catalyzes the reduction of the aldehyde to yield fusicocca-1,10(14)-diene-8-beta,16-diol. The next step is the hydroxylation at C-9 performed by the cytochrome P450 monooxygenase PaP450-3 that leads to fusicoccin H aglycon which is glycosylated to fusicoccin H by the O-glycosyltransferase PaGT. Hydroxylation at C-12 by the cytochrome P450 monooxygenase PaP450-4 leads then to the production of fusicoccin Q and is followed by methylation by the O-methyltransferase PaMT to yield fusicoccin P. Fusicoccin P is further converted to fusicoccin J via prenylation by the O-glucose prenyltransferase PaPT. Cytochrome P450 monooxygenase PaP450-5 then performs hydroxylation at C-19 to yield dideacetyl-fusicoccin A which is acetylated to 3'-O-deacetyl-fusicoccin A by the O-acetyltransferase PaAT-2. Finally, a another acetylation by the O-acetyltransferase PaAT-1 yields fusicoccin A. This is O-acetyltransferase PaAT-2 from Phomopsis amygdali (Fusicoccum amygdali).